The primary structure comprises 456 residues: NAD-dependent deacetylase sir2C (456 aa).

Residues 161 to 443 form the Deacetylase sirtuin-type domain; it reads IEIENNKIKE…LNLSKLLNWD (283 aa). His-294 acts as the Proton acceptor in catalysis. Zn(2+) is bound by residues Cys-302, Cys-305, Cys-331, and Cys-336.

The protein belongs to the sirtuin family. Requires Zn(2+) as cofactor.

The enzyme catalyses N(6)-acetyl-L-lysyl-[protein] + NAD(+) + H2O = 2''-O-acetyl-ADP-D-ribose + nicotinamide + L-lysyl-[protein]. In terms of biological role, NAD-dependent deacetylase, which plays an important role in the regulation of transcriptional repression. In Dictyostelium discoideum (Social amoeba), this protein is NAD-dependent deacetylase sir2C (sir2C).